A 374-amino-acid polypeptide reads, in one-letter code: Magnesium-chelatase subunit ChlI (374 aa).

47 to 54 (GDRGTGKS) contributes to the ATP binding site.

It belongs to the Mg-chelatase subunits D/I family.

It carries out the reaction protoporphyrin IX + Mg(2+) + ATP + H2O = Mg-protoporphyrin IX + ADP + phosphate + 3 H(+). It participates in porphyrin-containing compound metabolism; chlorophyll biosynthesis. In terms of biological role, involved in chlorophyll biosynthesis; introduces a magnesium ion into protoporphyrin IX to yield Mg-protoporphyrin IX. In Nostoc sp. (strain PCC 7120 / SAG 25.82 / UTEX 2576), this protein is Magnesium-chelatase subunit ChlI (chlI).